The sequence spans 217 residues: Non-structural protein NS3 (217 aa).

The protein belongs to the orbivirus NS3 family.

Functionally, may play a role in the release of virions from infected cells. This African horse sickness virus 9 (AHSV-9) protein is Non-structural protein NS3 (Segment-10).